The primary structure comprises 417 residues: Tryptophan decarboxylase (417 aa).

K263 is modified (N6-(pyridoxal phosphate)lysine).

This sequence belongs to the group II decarboxylase family. Pyridoxal 5'-phosphate is required as a cofactor.

The protein localises to the cytoplasm. It catalyses the reaction L-tryptophan + H(+) = tryptamine + CO2. With respect to regulation, inhibited by (S)-alpha-fluoromethyltryptophan. In terms of biological role, catalyzes the decarboxylation of tryptophan to tryptamine. Tryptamine is a neurotransmitter that induces the release of serotonin, which is suggested to modulate gastrointestinal motility. Therefore, the tryptophan decarboxylase from the gut bacteria Clostridium sporogenes (strain ATCC 15579) may influence host brain and behavior. Has weak activity with tyrosine. Activity against phenylalanine is undetectable. The chain is Tryptophan decarboxylase from Clostridium sporogenes (strain ATCC 15579).